Consider the following 59-residue polypeptide: Large ribosomal subunit protein uL30 (59 aa).

This sequence belongs to the universal ribosomal protein uL30 family. Part of the 50S ribosomal subunit.

The chain is Large ribosomal subunit protein uL30 from Geobacter sulfurreducens (strain ATCC 51573 / DSM 12127 / PCA).